Here is a 120-residue protein sequence, read N- to C-terminus: Large ribosomal subunit protein uL18 (120 aa).

The protein belongs to the universal ribosomal protein uL18 family. As to quaternary structure, part of the 50S ribosomal subunit; part of the 5S rRNA/L5/L18/L25 subcomplex. Contacts the 5S and 23S rRNAs.

In terms of biological role, this is one of the proteins that bind and probably mediate the attachment of the 5S RNA into the large ribosomal subunit, where it forms part of the central protuberance. The polypeptide is Large ribosomal subunit protein uL18 (Bacillus cereus (strain G9842)).